Reading from the N-terminus, the 230-residue chain is UPF0173 metal-dependent hydrolase OEOE_1287 (230 aa).

Belongs to the UPF0173 family.

This is UPF0173 metal-dependent hydrolase OEOE_1287 from Oenococcus oeni (strain ATCC BAA-331 / PSU-1).